Reading from the N-terminus, the 351-residue chain is Phosphoribosylformylglycinamidine cyclo-ligase (351 aa).

It belongs to the AIR synthase family.

The protein resides in the cytoplasm. The enzyme catalyses 2-formamido-N(1)-(5-O-phospho-beta-D-ribosyl)acetamidine + ATP = 5-amino-1-(5-phospho-beta-D-ribosyl)imidazole + ADP + phosphate + H(+). The protein operates within purine metabolism; IMP biosynthesis via de novo pathway; 5-amino-1-(5-phospho-D-ribosyl)imidazole from N(2)-formyl-N(1)-(5-phospho-D-ribosyl)glycinamide: step 2/2. The chain is Phosphoribosylformylglycinamidine cyclo-ligase from Xylella fastidiosa (strain 9a5c).